A 543-amino-acid chain; its full sequence is Phosphoribosylaminoimidazole carboxylase (543 aa).

Residues 110–297 form the ATP-grasp domain; the sequence is KEHLIKNGIA…QFEAHVRAIT (188 aa). 137–192 provides a ligand contact to ATP; it reads GAKYGFPYMLKSRTMAYDGRGNFVVKDKSYIPEALKVLDDRPLYAEKWAPFSKELA.

In the C-terminal section; belongs to the AIR carboxylase family. Class I subfamily.

The catalysed reaction is 5-amino-1-(5-phospho-D-ribosyl)imidazole-4-carboxylate + H(+) = 5-amino-1-(5-phospho-beta-D-ribosyl)imidazole + CO2. It participates in purine metabolism; IMP biosynthesis via de novo pathway; 5-amino-1-(5-phospho-D-ribosyl)imidazole-4-carboxylate from 5-amino-1-(5-phospho-D-ribosyl)imidazole (carboxylase route): step 1/1. In Ogataea methanolica (Yeast), this protein is Phosphoribosylaminoimidazole carboxylase (ADE1).